The sequence spans 382 residues: Queuine tRNA-ribosyltransferase (382 aa).

The active-site Proton acceptor is D93. Substrate-binding positions include 93 to 97, D147, Q191, and G218; that span reads DSGGF. Positions 249 to 255 are RNA binding; the sequence is GVGKPED. The active-site Nucleophile is D268. An RNA binding; important for wobble base 34 recognition region spans residues 273-277; sequence TRNAR. Zn(2+)-binding residues include C306, C308, C311, and H337.

It belongs to the queuine tRNA-ribosyltransferase family. Homodimer. Within each dimer, one monomer is responsible for RNA recognition and catalysis, while the other monomer binds to the replacement base PreQ1. The cofactor is Zn(2+).

The catalysed reaction is 7-aminomethyl-7-carbaguanine + guanosine(34) in tRNA = 7-aminomethyl-7-carbaguanosine(34) in tRNA + guanine. It participates in tRNA modification; tRNA-queuosine biosynthesis. In terms of biological role, catalyzes the base-exchange of a guanine (G) residue with the queuine precursor 7-aminomethyl-7-deazaguanine (PreQ1) at position 34 (anticodon wobble position) in tRNAs with GU(N) anticodons (tRNA-Asp, -Asn, -His and -Tyr). Catalysis occurs through a double-displacement mechanism. The nucleophile active site attacks the C1' of nucleotide 34 to detach the guanine base from the RNA, forming a covalent enzyme-RNA intermediate. The proton acceptor active site deprotonates the incoming PreQ1, allowing a nucleophilic attack on the C1' of the ribose to form the product. After dissociation, two additional enzymatic reactions on the tRNA convert PreQ1 to queuine (Q), resulting in the hypermodified nucleoside queuosine (7-(((4,5-cis-dihydroxy-2-cyclopenten-1-yl)amino)methyl)-7-deazaguanosine). This chain is Queuine tRNA-ribosyltransferase, found in Haemophilus influenzae (strain PittEE).